The sequence spans 368 residues: Phosphoserine aminotransferase (368 aa).

Residue R42 coordinates L-glutamate. Pyridoxal 5'-phosphate is bound by residues W101, T151, D175, and Q198. K199 carries the post-translational modification N6-(pyridoxal phosphate)lysine. 240–241 (NT) is a pyridoxal 5'-phosphate binding site.

This sequence belongs to the class-V pyridoxal-phosphate-dependent aminotransferase family. SerC subfamily. As to quaternary structure, homodimer. The cofactor is pyridoxal 5'-phosphate.

The protein localises to the cytoplasm. It carries out the reaction O-phospho-L-serine + 2-oxoglutarate = 3-phosphooxypyruvate + L-glutamate. It catalyses the reaction 4-(phosphooxy)-L-threonine + 2-oxoglutarate = (R)-3-hydroxy-2-oxo-4-phosphooxybutanoate + L-glutamate. It functions in the pathway amino-acid biosynthesis; L-serine biosynthesis; L-serine from 3-phospho-D-glycerate: step 2/3. Its pathway is cofactor biosynthesis; pyridoxine 5'-phosphate biosynthesis; pyridoxine 5'-phosphate from D-erythrose 4-phosphate: step 3/5. Its function is as follows. Catalyzes the reversible conversion of 3-phosphohydroxypyruvate to phosphoserine and of 3-hydroxy-2-oxo-4-phosphonooxybutanoate to phosphohydroxythreonine. The protein is Phosphoserine aminotransferase of Polaromonas sp. (strain JS666 / ATCC BAA-500).